The sequence spans 458 residues: Protein unc-93 homolog A (458 aa).

5 consecutive transmembrane segments (helical) span residues 8–28 (VLVV…LQNL), 42–62 (TLST…PILI), 69–89 (WTIV…FHAN), 90–110 (WYTL…LWSA), and 140–160 (IFFL…SLVF). Asparagine 190 is a glycosylation site (N-linked (GlcNAc...) asparagine). 7 helical membrane-spanning segments follow: residues 202 to 222 (TLLG…AVFL), 258 to 275 (LCLL…QEFL), 286 to 306 (CALG…MTAL), 321 to 341 (AALY…FLLW), 345 to 365 (TNQL…DAVW), 390 to 410 (LGEA…CVST), and 412 to 432 (LYIL…VEYL).

The protein belongs to the unc-93 family.

The protein localises to the cell membrane. This Mus musculus (Mouse) protein is Protein unc-93 homolog A (Unc93a).